A 245-amino-acid polypeptide reads, in one-letter code: MANDTHTDDLDELLDSALDDFKDLNLTQRNGGVKKEEGDKKETESLPSGVQGLGMGLPDMRSKKKGKKKIAKEDHVTEALDKLREQTRETVKGLESLSSKQQPTGSDDAMVEDWIKQFENLTGSNDLESIVDTMMQQLLSKDILHEPMKEIGARYPKWLEEHESSLNKEEFDRYSRQYELIKELNLVYENEPNNSTKIMEIMQKMQECGQPPSDIVQEMDPGFDFASLGQMSPDMLESSPNCCVM.

Residues 17–106 (ALDDFKDLNL…LSSKQQPTGS (90 aa)) are disordered. Basic and acidic residues-rich tracts occupy residues 33–44 (VKKEEGDKKETE) and 71–92 (AKED…ETVK). Positions 96 to 105 (SLSSKQQPTG) are enriched in polar residues. At cysteine 242 the chain carries Cysteine methyl ester. Cysteine 242 is lipidated: S-farnesyl cysteine. A propeptide spans 243–245 (CVM) (removed in mature form).

It belongs to the peroxin-19 family. In terms of assembly, dimer. Interacts with PEX10 (via C-terminus). Post-translationally, may be farnesylated. In terms of tissue distribution, expressed in roots, leaves, flowers, siliques and stems. Highest expression in roots and leaves.

The protein resides in the cytoplasm. Its subcellular location is the peroxisome membrane. In terms of biological role, contributes to morphology determination of peroxisomes, but not to import of peroxisomal matrix proteins. Required for proper post-translational import and stabilization of peroxisomal membrane proteins (PMPs). Acts as a cytosolic import receptor for PMPs and delivers them to the docking factor PEX3 at the peroxisomal membrane for subsequent insertion into the membrane. Acts as a chaperone in stabilizing or maintaining PMPs in the lipid bilayer. This is Peroxisome biogenesis protein 19-2 (PEX19-2) from Arabidopsis thaliana (Mouse-ear cress).